The primary structure comprises 644 residues: Phosphomethylpyrimidine synthase (644 aa).

Residues asparagine 236, methionine 265, tyrosine 294, histidine 330, 350–352, 391–394, and glutamate 430 each bind substrate; these read SRG and DGLR. Histidine 434 lines the Zn(2+) pocket. Substrate is bound at residue tyrosine 457. A Zn(2+)-binding site is contributed by histidine 498. Residues cysteine 578, cysteine 581, and cysteine 586 each contribute to the [4Fe-4S] cluster site.

Belongs to the ThiC family. Homodimer. It depends on [4Fe-4S] cluster as a cofactor.

The catalysed reaction is 5-amino-1-(5-phospho-beta-D-ribosyl)imidazole + S-adenosyl-L-methionine = 4-amino-2-methyl-5-(phosphooxymethyl)pyrimidine + CO + 5'-deoxyadenosine + formate + L-methionine + 3 H(+). It functions in the pathway cofactor biosynthesis; thiamine diphosphate biosynthesis. Its function is as follows. Catalyzes the synthesis of the hydroxymethylpyrimidine phosphate (HMP-P) moiety of thiamine from aminoimidazole ribotide (AIR) in a radical S-adenosyl-L-methionine (SAM)-dependent reaction. This Aliivibrio fischeri (strain ATCC 700601 / ES114) (Vibrio fischeri) protein is Phosphomethylpyrimidine synthase.